The sequence spans 643 residues: Replication protein E1 (643 aa).

The Nuclear localization signal motif lies at 86-88 (KRK). Residues 109-118 (LSPRLQEISL) carry the Nuclear export signal motif. Serine 110 is subject to Phosphoserine; by host. The span at 152-175 (NTNAENGGSVHSTQSSGGDSSDNA) shows a compositional bias: polar residues. Residues 152–178 (NTNAENGGSVHSTQSSGGDSSDNAENV) are disordered. The interval 179-345 (DPHCSITELK…LTIIQHGIDD (167 aa)) is DNA-binding region. The 151-residue stretch at 444–594 (VEFISFLRAL…FPFDKNGNPV (151 aa)) folds into the SF3 helicase domain. Position 470–477 (470–477 (GPANTGKS)) interacts with ATP. Lysine 551 participates in a covalent cross-link: Glycyl lysine isopeptide (Lys-Gly) (interchain with G-Cter in SUMO).

This sequence belongs to the papillomaviridae E1 protein family. In terms of assembly, can form hexamers. Interacts with E2 protein; this interaction increases E1 DNA binding specificity. Interacts with host DNA polymerase subunit POLA2. Interacts with host single stranded DNA-binding protein RPA1. Interacts with host TOP1; this interaction stimulates the enzymatic activity of TOP1. Post-translationally, phosphorylated. Sumoylated.

The protein localises to the host nucleus. The enzyme catalyses Couples ATP hydrolysis with the unwinding of duplex DNA by translocating in the 3'-5' direction.. It carries out the reaction ATP + H2O = ADP + phosphate + H(+). Its function is as follows. ATP-dependent DNA 3'-5' helicase required for initiation of viral DNA replication. It forms a complex with the viral E2 protein. The E1-E2 complex binds to the replication origin which contains binding sites for both proteins. During the initial step, a dimer of E1 interacts with a dimer of protein E2 leading to a complex that binds the viral origin of replication with high specificity. Then, a second dimer of E1 displaces the E2 dimer in an ATP-dependent manner to form the E1 tetramer. Following this, two E1 monomers are added to each half of the site, which results in the formation of two E1 trimers on the viral ori. Subsequently, two hexamers will be created. The double hexamer acts as a bi-directional helicase machinery and unwinds the viral DNA and then recruits the host DNA polymerase to start replication. In Human papillomavirus 45, this protein is Replication protein E1.